A 352-amino-acid chain; its full sequence is Putative [LysW]-L-2-aminoadipate 6-phosphate reductase (352 aa).

Residue 11–14 (SGYT) coordinates NADP(+). Residue Cys148 is part of the active site. NADP(+) is bound at residue Asn319.

The protein belongs to the NAGSA dehydrogenase family. Type 1 subfamily. LysY sub-subfamily.

The protein localises to the cytoplasm. The enzyme catalyses [amino-group carrier protein]-C-terminal-N-(1-carboxy-5-oxopentan-1-yl)-L-glutamine + phosphate + NADP(+) = [amino-group carrier protein]-C-terminal-N-(1-carboxy-5-phosphooxy-5-oxopentan-1-yl)-L-glutamine + NADPH + H(+). It functions in the pathway amino-acid biosynthesis; L-lysine biosynthesis via AAA pathway; L-lysine from L-alpha-aminoadipate (Thermus route): step 3/5. Functionally, catalyzes the NADPH-dependent reduction of [LysW]-aminoadipate 6-phosphate to yield [LysW]-aminoadipate 6-semialdehyde. The protein is Putative [LysW]-L-2-aminoadipate 6-phosphate reductase of Thermomicrobium roseum (strain ATCC 27502 / DSM 5159 / P-2).